The sequence spans 28 residues: Cytochrome c oxidase subunit 5B, mitochondrial (28 aa).

The protein belongs to the cytochrome c oxidase subunit 5B family. As to quaternary structure, component of the cytochrome c oxidase (complex IV, CIV), a multisubunit enzyme composed of a catalytic core of 3 subunits and several supernumerary subunits. The complex exists as a monomer or a dimer and forms supercomplexes (SCs) in the inner mitochondrial membrane with ubiquinol-cytochrome c oxidoreductase (cytochrome b-c1 complex, complex III, CIII).

The protein localises to the mitochondrion inner membrane. It functions in the pathway energy metabolism; oxidative phosphorylation. Functionally, component of the cytochrome c oxidase, the last enzyme in the mitochondrial electron transport chain which drives oxidative phosphorylation. The respiratory chain contains 3 multisubunit complexes succinate dehydrogenase (complex II, CII), ubiquinol-cytochrome c oxidoreductase (cytochrome b-c1 complex, complex III, CIII) and cytochrome c oxidase (complex IV, CIV), that cooperate to transfer electrons derived from NADH and succinate to molecular oxygen, creating an electrochemical gradient over the inner membrane that drives transmembrane transport and the ATP synthase. Cytochrome c oxidase is the component of the respiratory chain that catalyzes the reduction of oxygen to water. Electrons originating from reduced cytochrome c in the intermembrane space (IMS) are transferred via the dinuclear copper A center (CU(A)) of subunit 2 and heme A of subunit 1 to the active site in subunit 1, a binuclear center (BNC) formed by heme A3 and copper B (CU(B)). The BNC reduces molecular oxygen to 2 water molecules using 4 electrons from cytochrome c in the IMS and 4 protons from the mitochondrial matrix. This chain is Cytochrome c oxidase subunit 5B, mitochondrial, found in Solanum tuberosum (Potato).